The following is a 403-amino-acid chain: MPLRSEEGPYFGDFGGRFVPESLVAALDELSAAWEAAKADPAFHVQLDELHRSYTGRPSIVTEVPRFAEHGGGARLLLKREDLNHTGSHKINNVLGQAILTKRIGKTRVIAETGAGQHGVAIATAAALFGLSCTIYMGEVDTERQALNVARMRLLGAEVVAVKTGSRTLKDAINDAMRDWVTNVETTNYIFGTVAGPHPFPTMVRDLQRIIGEEAREQVLALTGRLPDAVAACVGGGSNAMGIFHAFLDDENVRLVGFEAGGEGADTPRHAATITKGRPGVLHGARSLLLQDEDGQTIESHSISAGLDYPGVGPEHAWLAAIGRAEYRPVSDAEAMEALRLLSRTEGIIPAIESAHALAGALDLGRELGPEGVVLVSLSGRGDKDMETAGRYFGLIEEGAVQS.

The residue at position 90 (Lys90) is an N6-(pyridoxal phosphate)lysine.

This sequence belongs to the TrpB family. Tetramer of two alpha and two beta chains. Requires pyridoxal 5'-phosphate as cofactor.

The enzyme catalyses (1S,2R)-1-C-(indol-3-yl)glycerol 3-phosphate + L-serine = D-glyceraldehyde 3-phosphate + L-tryptophan + H2O. It participates in amino-acid biosynthesis; L-tryptophan biosynthesis; L-tryptophan from chorismate: step 5/5. Functionally, the beta subunit is responsible for the synthesis of L-tryptophan from indole and L-serine. The protein is Tryptophan synthase beta chain of Leifsonia xyli subsp. xyli (strain CTCB07).